The chain runs to 77 residues: Mu-conotoxin BuIIIA (77 aa).

The signal sequence occupies residues 1–22 (MMSKLGVLLTICLLLFPLFALP). Residues 23 to 51 (QDGDQPADRPAERMQDDISSEQNSLLEKR) constitute a propeptide that is removed on maturation. The tract at residues 26 to 46 (DQPADRPAERMQDDISSEQNS) is disordered. The span at 28 to 38 (PADRPAERMQD) shows a compositional bias: basic and acidic residues. Cystine bridges form between cysteine 56/cysteine 67, cysteine 57/cysteine 73, and cysteine 63/cysteine 74. Cysteine amide is present on cysteine 74.

This sequence belongs to the conotoxin M superfamily. In terms of tissue distribution, expressed by the venom duct.

Its subcellular location is the secreted. Its function is as follows. Mu-conotoxins block voltage-gated sodium channels (Nav). This synthetic toxin potently blocks rNav1.2/SCN2A, and rNav1.4/SCN4A. It also moderately blocks rNav1.1/SCN1A, rNav1.3/SCN3A, rNav1.5/SCN5A, and mNav1.6/SCN8A. The inhibition is reversible. This is Mu-conotoxin BuIIIA from Conus bullatus (Bubble cone).